A 423-amino-acid chain; its full sequence is Lysosomal acid phosphatase (423 aa).

The N-terminal stretch at 1 to 30 (MAGKRSGWSRAALLQLLLGVNLVVMPPTQA) is a signal peptide. Residues 31-380 (RSLRFVTLLY…QVASGPADTE (350 aa)) are Lumenal-facing. The Nucleophile role is filled by His42. Asn92, Asn133, Asn167, Asn177, Asn191, and Asn267 each carry an N-linked (GlcNAc...) asparagine glycan. Intrachain disulfides connect Cys159–Cys370, Cys212–Cys310, and Cys345–Cys349. The active-site Proton donor is Asp287. N-linked (GlcNAc...) asparagine glycans are attached at residues Asn322 and Asn331. The chain crosses the membrane as a helical span at residues 381 to 401 (VIVALAVCGSILFLLIVLLLT). Over 402–423 (VLFRMQAQPPGYRHVADGEDHA) the chain is Cytoplasmic.

It belongs to the histidine acid phosphatase family. The membrane-bound form is converted to the soluble form by sequential proteolytic processing. First, the C-terminal cytoplasmic tail is removed. Cleavage by a lysosomal protease releases the soluble form in the lysosome lumen.

The protein resides in the lysosome membrane. It localises to the lysosome lumen. It catalyses the reaction a phosphate monoester + H2O = an alcohol + phosphate. The protein is Lysosomal acid phosphatase (ACP2) of Pongo abelii (Sumatran orangutan).